Consider the following 360-residue polypeptide: DNA replication and repair protein RecF (360 aa).

Residue 30–37 coordinates ATP; it reads GHNGSGKT.

The protein belongs to the RecF family.

The protein localises to the cytoplasm. Its function is as follows. The RecF protein is involved in DNA metabolism; it is required for DNA replication and normal SOS inducibility. RecF binds preferentially to single-stranded, linear DNA. It also seems to bind ATP. The protein is DNA replication and repair protein RecF of Shewanella pealeana (strain ATCC 700345 / ANG-SQ1).